The chain runs to 235 residues: KNMITGAAQMDGAILVVSGADGPMPQTKEHILLAKQVGVPSIVVFLNKADQVDDEELLELVELEVRETLNEYEFPGDDIPITSGSALLALEALTENPDTNRTGDPWVKKIYDLMNEVDNYIPLPTRDTDKPFLMAIENVVSITGRGTVTTGRVERGADQVGDNIEIVGLKETRQATITGLEMFQKTLEKSVAGDNVGVLLRGIQKEEVEPGMVLAKPGSITPHKQFEAQVYILKK.

The tr-type G domain maps to K1–T125. N47–D50 contacts GTP.

This sequence belongs to the TRAFAC class translation factor GTPase superfamily. Classic translation factor GTPase family. EF-Tu/EF-1A subfamily.

It is found in the plastid. The protein resides in the chloroplast. It catalyses the reaction GTP + H2O = GDP + phosphate + H(+). Its function is as follows. GTP hydrolase that promotes the GTP-dependent binding of aminoacyl-tRNA to the A-site of ribosomes during protein biosynthesis. The chain is Elongation factor Tu, chloroplastic (tufA) from Bryopsis plumosa (Green alga).